Here is a 352-residue protein sequence, read N- to C-terminus: Peptide chain release factor 1 (352 aa).

Residue Q229 is modified to N5-methylglutamine.

The protein belongs to the prokaryotic/mitochondrial release factor family. Methylated by PrmC. Methylation increases the termination efficiency of RF1.

It localises to the cytoplasm. In terms of biological role, peptide chain release factor 1 directs the termination of translation in response to the peptide chain termination codons UAG and UAA. The chain is Peptide chain release factor 1 from Gluconacetobacter diazotrophicus (strain ATCC 49037 / DSM 5601 / CCUG 37298 / CIP 103539 / LMG 7603 / PAl5).